We begin with the raw amino-acid sequence, 457 residues long: Transmembrane protein 143 (457 aa).

2 consecutive transmembrane segments (helical) span residues 264 to 284 (ILNV…GMVV) and 285 to 305 (LSDL…FMGL). Position 316 is a phosphoserine (Ser316). Over residues 429–439 (LSSPKSAPSDD) the composition is skewed to polar residues. The segment at 429-457 (LSSPKSAPSDDNSLEKPLGPAQPSHLVGN) is disordered.

It is found in the membrane. This Bos taurus (Bovine) protein is Transmembrane protein 143 (TMEM143).